Reading from the N-terminus, the 403-residue chain is 4-hydroxy-3-methylbut-2-enyl diphosphate reductase (403 aa).

Cys66 serves as a coordination point for [4Fe-4S] cluster. His96 is a (2E)-4-hydroxy-3-methylbut-2-enyl diphosphate binding site. His96 contacts dimethylallyl diphosphate. His96 contacts isopentenyl diphosphate. Residue Cys157 participates in [4Fe-4S] cluster binding. His185 serves as a coordination point for (2E)-4-hydroxy-3-methylbut-2-enyl diphosphate. His185 serves as a coordination point for dimethylallyl diphosphate. Residue His185 coordinates isopentenyl diphosphate. Glu187 (proton donor) is an active-site residue. Thr250 serves as a coordination point for (2E)-4-hydroxy-3-methylbut-2-enyl diphosphate. A [4Fe-4S] cluster-binding site is contributed by Cys288. 4 residues coordinate (2E)-4-hydroxy-3-methylbut-2-enyl diphosphate: Ser317, Ser318, Asn319, and Ser379. Dimethylallyl diphosphate is bound by residues Ser317, Ser318, Asn319, and Ser379. Ser317, Ser318, Asn319, and Ser379 together coordinate isopentenyl diphosphate.

The protein belongs to the IspH family. Requires [4Fe-4S] cluster as cofactor.

The catalysed reaction is isopentenyl diphosphate + 2 oxidized [2Fe-2S]-[ferredoxin] + H2O = (2E)-4-hydroxy-3-methylbut-2-enyl diphosphate + 2 reduced [2Fe-2S]-[ferredoxin] + 2 H(+). It carries out the reaction dimethylallyl diphosphate + 2 oxidized [2Fe-2S]-[ferredoxin] + H2O = (2E)-4-hydroxy-3-methylbut-2-enyl diphosphate + 2 reduced [2Fe-2S]-[ferredoxin] + 2 H(+). It functions in the pathway isoprenoid biosynthesis; dimethylallyl diphosphate biosynthesis; dimethylallyl diphosphate from (2E)-4-hydroxy-3-methylbutenyl diphosphate: step 1/1. Its pathway is isoprenoid biosynthesis; isopentenyl diphosphate biosynthesis via DXP pathway; isopentenyl diphosphate from 1-deoxy-D-xylulose 5-phosphate: step 6/6. Catalyzes the conversion of 1-hydroxy-2-methyl-2-(E)-butenyl 4-diphosphate (HMBPP) into a mixture of isopentenyl diphosphate (IPP) and dimethylallyl diphosphate (DMAPP). Acts in the terminal step of the DOXP/MEP pathway for isoprenoid precursor biosynthesis. In Rippkaea orientalis (strain PCC 8801 / RF-1) (Cyanothece sp. (strain PCC 8801)), this protein is 4-hydroxy-3-methylbut-2-enyl diphosphate reductase.